The chain runs to 90 residues: Putative beta-neurotoxin RjAa14F (90 aa).

The first 18 residues, 1–18, serve as a signal peptide directing secretion; that stretch reads MKILIFIIASFMLIGVEC. The region spanning 19 to 89 is the LCN-type CS-alpha/beta domain; it reads KEGYPTNSEG…VWDPNNNKCV (71 aa). Intrachain disulfides connect Cys29–Cys88, Cys33–Cys62, Cys40–Cys69, and Cys44–Cys71.

The protein belongs to the long (4 C-C) scorpion toxin superfamily. Sodium channel inhibitor family. Beta subfamily. In terms of tissue distribution, expressed by the venom gland.

It is found in the secreted. Its function is as follows. Beta toxins bind voltage-independently at site-4 of sodium channels (Nav) and shift the voltage of activation toward more negative potentials thereby affecting sodium channel activation and promoting spontaneous and repetitive firing. The chain is Putative beta-neurotoxin RjAa14F from Rhopalurus junceus (Caribbean blue scorpion).